The chain runs to 671 residues: Acetyl-coenzyme A synthetase 2 (671 aa).

Residues 207–210 (RGGR) and Thr326 contribute to the CoA site. ATP-binding positions include 402 to 404 (GEP), 426 to 431 (DTYWQT), Asp517, and Arg532. Residue Ser540 participates in CoA binding. Arg543 lines the ATP pocket. Arg603 is a binding site for CoA.

This sequence belongs to the ATP-dependent AMP-binding enzyme family.

It catalyses the reaction acetate + ATP + CoA = acetyl-CoA + AMP + diphosphate. This is Acetyl-coenzyme A synthetase 2 (ACS2) from Candida albicans (strain SC5314 / ATCC MYA-2876) (Yeast).